We begin with the raw amino-acid sequence, 187 residues long: Elongation factor P (187 aa).

The protein belongs to the elongation factor P family.

Its subcellular location is the cytoplasm. It functions in the pathway protein biosynthesis; polypeptide chain elongation. In terms of biological role, involved in peptide bond synthesis. Stimulates efficient translation and peptide-bond synthesis on native or reconstituted 70S ribosomes in vitro. Probably functions indirectly by altering the affinity of the ribosome for aminoacyl-tRNA, thus increasing their reactivity as acceptors for peptidyl transferase. In Nocardia farcinica (strain IFM 10152), this protein is Elongation factor P.